A 1415-amino-acid chain; its full sequence is G8 domain-containing protein DDB_G0278975 (1415 aa).

The signal sequence occupies residues Met1 to Ala24. 2 helical membrane passes run Ile107–Thr127 and Leu138–Ile158. 5 N-linked (GlcNAc...) asparagine glycosylation sites follow: Asn245, Asn366, Asn428, Asn466, and Asn579. In terms of domain architecture, G8 spans Ser566–Ala692. 2 PbH1 repeats span residues Leu819–Gly841 and Thr842–Asp864. 7 N-linked (GlcNAc...) asparagine glycosylation sites follow: Asn844, Asn985, Asn1009, Asn1023, Asn1099, Asn1244, and Asn1342.

It belongs to the comF family.

The protein localises to the membrane. This chain is G8 domain-containing protein DDB_G0278975, found in Dictyostelium discoideum (Social amoeba).